Consider the following 193-residue polypeptide: Immunogenic protein MPB70 (193 aa).

The signal sequence occupies residues 1-30 (MKVKNTIAATSFAAAGLAALAVAVSPPAAA). Residues 57-189 (QDPVAVAASN…ATVYMIDSVL (133 aa)) form the FAS1 domain.

In terms of assembly, generally found as a monomer; homodimer in culture fluids.

The protein resides in the secreted. The protein is Immunogenic protein MPB70 (mpb70) of Mycobacterium bovis (strain ATCC BAA-935 / AF2122/97).